The following is a 398-amino-acid chain: 1-deoxy-D-xylulose 5-phosphate reductoisomerase (398 aa).

Residues threonine 10, glycine 11, serine 12, isoleucine 13, glycine 36, asparagine 38, and asparagine 124 each contribute to the NADPH site. A 1-deoxy-D-xylulose 5-phosphate-binding site is contributed by lysine 125. Glutamate 126 contacts NADPH. Residue aspartate 150 coordinates Mn(2+). 1-deoxy-D-xylulose 5-phosphate contacts are provided by serine 151, glutamate 152, serine 176, and histidine 199. Residue glutamate 152 participates in Mn(2+) binding. Position 205 (glycine 205) interacts with NADPH. 1-deoxy-D-xylulose 5-phosphate contacts are provided by serine 212, asparagine 217, lysine 218, and glutamate 221. A Mn(2+)-binding site is contributed by glutamate 221.

Belongs to the DXR family. The cofactor is Mg(2+). Mn(2+) serves as cofactor.

The enzyme catalyses 2-C-methyl-D-erythritol 4-phosphate + NADP(+) = 1-deoxy-D-xylulose 5-phosphate + NADPH + H(+). The protein operates within isoprenoid biosynthesis; isopentenyl diphosphate biosynthesis via DXP pathway; isopentenyl diphosphate from 1-deoxy-D-xylulose 5-phosphate: step 1/6. Functionally, catalyzes the NADPH-dependent rearrangement and reduction of 1-deoxy-D-xylulose-5-phosphate (DXP) to 2-C-methyl-D-erythritol 4-phosphate (MEP). This is 1-deoxy-D-xylulose 5-phosphate reductoisomerase from Nostoc punctiforme (strain ATCC 29133 / PCC 73102).